The following is a 129-amino-acid chain: Large ribosomal subunit protein bL19 (129 aa).

Belongs to the bacterial ribosomal protein bL19 family.

This protein is located at the 30S-50S ribosomal subunit interface and may play a role in the structure and function of the aminoacyl-tRNA binding site. In Rhizorhabdus wittichii (strain DSM 6014 / CCUG 31198 / JCM 15750 / NBRC 105917 / EY 4224 / RW1) (Sphingomonas wittichii), this protein is Large ribosomal subunit protein bL19.